Reading from the N-terminus, the 341-residue chain is Anthranilate phosphoribosyltransferase (341 aa).

Residues glycine 79, 82–83 (GD), threonine 87, 89–92 (NIST), 107–115 (KHGNRAVSS), and serine 119 contribute to the 5-phospho-alpha-D-ribose 1-diphosphate site. Glycine 79 lines the anthranilate pocket. Position 91 (serine 91) interacts with Mg(2+). Asparagine 110 is a binding site for anthranilate. Residue arginine 165 coordinates anthranilate. The Mg(2+) site is built by aspartate 224 and glutamate 225.

It belongs to the anthranilate phosphoribosyltransferase family. In terms of assembly, homodimer. Requires Mg(2+) as cofactor.

It carries out the reaction N-(5-phospho-beta-D-ribosyl)anthranilate + diphosphate = 5-phospho-alpha-D-ribose 1-diphosphate + anthranilate. It functions in the pathway amino-acid biosynthesis; L-tryptophan biosynthesis; L-tryptophan from chorismate: step 2/5. In terms of biological role, catalyzes the transfer of the phosphoribosyl group of 5-phosphorylribose-1-pyrophosphate (PRPP) to anthranilate to yield N-(5'-phosphoribosyl)-anthranilate (PRA). The sequence is that of Anthranilate phosphoribosyltransferase from Bacillus cereus (strain AH820).